The following is a 294-amino-acid chain: 2,4-diacetylphloroglucinol hydrolase (294 aa).

Residues histidine 129, glutamate 160, histidine 270, and glutamate 274 each coordinate Zn(2+).

It belongs to the DAPG/phloretin hydrolase family. In terms of assembly, homodimer. The cofactor is Zn(2+).

The enzyme catalyses 2,4-diacetylphloroglucinol + H2O = 2-acetylphloroglucinol + acetate. Its activity is regulated as follows. Specifically and significantly activated by CoCl(2). Competitively inhibited by MAPG, but not by 2-hydroxy- and 4-hydroxyacetophenone. Its function is as follows. Hydrolase that specifically degrades the potent antimicrobial compound 2,4-diacetylphloroglucinol (DAPG) to equimolar amounts of mildly toxic monoacetylphloroglucinol (MAPG) and acetate. The chain is 2,4-diacetylphloroglucinol hydrolase from Pseudomonas sp.